We begin with the raw amino-acid sequence, 220 residues long: Protein-L-isoaspartate O-methyltransferase (220 aa).

Ser65 is a catalytic residue.

This sequence belongs to the methyltransferase superfamily. L-isoaspartyl/D-aspartyl protein methyltransferase family.

It is found in the cytoplasm. It catalyses the reaction [protein]-L-isoaspartate + S-adenosyl-L-methionine = [protein]-L-isoaspartate alpha-methyl ester + S-adenosyl-L-homocysteine. In terms of biological role, catalyzes the methyl esterification of L-isoaspartyl residues in peptides and proteins that result from spontaneous decomposition of normal L-aspartyl and L-asparaginyl residues. It plays a role in the repair and/or degradation of damaged proteins. The sequence is that of Protein-L-isoaspartate O-methyltransferase from Pelodictyon phaeoclathratiforme (strain DSM 5477 / BU-1).